A 338-amino-acid chain; its full sequence is UDP-N-acetylenolpyruvoylglucosamine reductase (338 aa).

The region spanning 17-188 (IAARTDWWID…MYVDYRLRLK (172 aa)) is the FAD-binding PCMH-type domain. The active site involves arginine 164. Serine 237 serves as the catalytic Proton donor. Residue glutamate 333 is part of the active site.

The protein belongs to the MurB family. FAD is required as a cofactor.

Its subcellular location is the cytoplasm. The catalysed reaction is UDP-N-acetyl-alpha-D-muramate + NADP(+) = UDP-N-acetyl-3-O-(1-carboxyvinyl)-alpha-D-glucosamine + NADPH + H(+). It functions in the pathway cell wall biogenesis; peptidoglycan biosynthesis. Functionally, cell wall formation. The chain is UDP-N-acetylenolpyruvoylglucosamine reductase from Porphyromonas gingivalis (strain ATCC BAA-308 / W83).